The chain runs to 222 residues: MKTTRAIAMLGLLLGLAACGTTPSTIVERPTTARPQAPAAVPATNGAIYQAATYRPLFEDRRARHVGDVLTIVINERTRAGKEASSSASKTSAVDASVGGVAKLPLKMFQGLGINAEASAEYEDESALDSSNTFSGNVTVTVIEVLPNGNLVVAGEKQIGLDKGTEYIRLSGVVQPDTIQAGNTVSSAKVADARIEYRSSAKFDKAEVMNWLGRFFLSFIPL.

Residues 1-18 (MKTTRAIAMLGLLLGLAA) form the signal peptide. C19 is lipidated: N-palmitoyl cysteine. A lipid anchor (S-diacylglycerol cysteine) is attached at C19.

Belongs to the FlgH family. As to quaternary structure, the basal body constitutes a major portion of the flagellar organelle and consists of four rings (L,P,S, and M) mounted on a central rod.

It is found in the cell outer membrane. The protein localises to the bacterial flagellum basal body. In terms of biological role, assembles around the rod to form the L-ring and probably protects the motor/basal body from shearing forces during rotation. The sequence is that of Flagellar L-ring protein from Thiobacillus denitrificans (strain ATCC 25259 / T1).